Consider the following 166-residue polypeptide: Ribonuclease P protein component (166 aa).

The protein belongs to the RnpA family. Consists of a catalytic RNA component (M1 or rnpB) and a protein subunit.

It catalyses the reaction Endonucleolytic cleavage of RNA, removing 5'-extranucleotides from tRNA precursor.. In terms of biological role, RNaseP catalyzes the removal of the 5'-leader sequence from pre-tRNA to produce the mature 5'-terminus. It can also cleave other RNA substrates such as 4.5S RNA. The protein component plays an auxiliary but essential role in vivo by binding to the 5'-leader sequence and broadening the substrate specificity of the ribozyme. The protein is Ribonuclease P protein component of Helicobacter pylori (strain HPAG1).